The sequence spans 353 residues: Holliday junction branch migration complex subunit RuvB (353 aa).

The segment at 4–185 is large ATPase domain (RuvB-L); sequence ADRLITATGG…FGIVQRLEFY (182 aa). Residues isoleucine 24, arginine 25, glycine 66, lysine 69, threonine 70, threonine 71, 132-134, arginine 175, tyrosine 185, and arginine 222 each bind ATP; that span reads EDF. Residue threonine 70 participates in Mg(2+) binding. The interval 186 to 256 is small ATPAse domain (RuvB-S); that stretch reads NIADLSTIVS…TADKALNLLD (71 aa). Positions 259-353 are head domain (RuvB-H); sequence EHGFDHQDRR…DDFGDEPVDL (95 aa). DNA contacts are provided by arginine 295, arginine 314, and arginine 319.

This sequence belongs to the RuvB family. In terms of assembly, homohexamer. Forms an RuvA(8)-RuvB(12)-Holliday junction (HJ) complex. HJ DNA is sandwiched between 2 RuvA tetramers; dsDNA enters through RuvA and exits via RuvB. An RuvB hexamer assembles on each DNA strand where it exits the tetramer. Each RuvB hexamer is contacted by two RuvA subunits (via domain III) on 2 adjacent RuvB subunits; this complex drives branch migration. In the full resolvosome a probable DNA-RuvA(4)-RuvB(12)-RuvC(2) complex forms which resolves the HJ.

It is found in the cytoplasm. It catalyses the reaction ATP + H2O = ADP + phosphate + H(+). In terms of biological role, the RuvA-RuvB-RuvC complex processes Holliday junction (HJ) DNA during genetic recombination and DNA repair, while the RuvA-RuvB complex plays an important role in the rescue of blocked DNA replication forks via replication fork reversal (RFR). RuvA specifically binds to HJ cruciform DNA, conferring on it an open structure. The RuvB hexamer acts as an ATP-dependent pump, pulling dsDNA into and through the RuvAB complex. RuvB forms 2 homohexamers on either side of HJ DNA bound by 1 or 2 RuvA tetramers; 4 subunits per hexamer contact DNA at a time. Coordinated motions by a converter formed by DNA-disengaged RuvB subunits stimulates ATP hydrolysis and nucleotide exchange. Immobilization of the converter enables RuvB to convert the ATP-contained energy into a lever motion, pulling 2 nucleotides of DNA out of the RuvA tetramer per ATP hydrolyzed, thus driving DNA branch migration. The RuvB motors rotate together with the DNA substrate, which together with the progressing nucleotide cycle form the mechanistic basis for DNA recombination by continuous HJ branch migration. Branch migration allows RuvC to scan DNA until it finds its consensus sequence, where it cleaves and resolves cruciform DNA. The sequence is that of Holliday junction branch migration complex subunit RuvB from Pseudomonas syringae pv. syringae (strain B728a).